A 236-amino-acid polypeptide reads, in one-letter code: Baculoviral IAP repeat-containing protein 8 (236 aa).

One copy of the BIR repeat lies at 7 to 70; it reads WLITFGTWMY…KWYPGCKYLL (64 aa). Residues C39, C42, H59, and C66 each contribute to the Zn(2+) site. An RING-type zinc finger spans residues 189–224; sequence CKICMDRHIAVVFIPCGHLVTCKQCAEAVDRCPMCN.

This sequence belongs to the IAP family. Binds to caspase-9.

It localises to the cytoplasm. In terms of biological role, protects against apoptosis mediated by BAX. This is Baculoviral IAP repeat-containing protein 8 (BIRC8) from Gorilla gorilla gorilla (Western lowland gorilla).